A 207-amino-acid chain; its full sequence is Small ribosomal subunit protein uS4 (207 aa).

A disordered region spans residues 31-55; sequence KCKLDSKPGQHGRTSGARTSDYGTQ. The segment covering 42-53 has biased composition (polar residues); sequence GRTSGARTSDYG. Positions 97 to 160 constitute an S4 RNA-binding domain; it reads SRLDNVVYRM…KKQARILEAL (64 aa).

Belongs to the universal ribosomal protein uS4 family. Part of the 30S ribosomal subunit. Contacts protein S5. The interaction surface between S4 and S5 is involved in control of translational fidelity.

Its function is as follows. One of the primary rRNA binding proteins, it binds directly to 16S rRNA where it nucleates assembly of the body of the 30S subunit. In terms of biological role, with S5 and S12 plays an important role in translational accuracy. The polypeptide is Small ribosomal subunit protein uS4 (Paraburkholderia phymatum (strain DSM 17167 / CIP 108236 / LMG 21445 / STM815) (Burkholderia phymatum)).